Reading from the N-terminus, the 34-residue chain is Photosystem I reaction center subunit XII (34 aa).

A helical transmembrane segment spans residues 10–32; sequence VFVALVVAAHAAVLALRLSISLY.

Belongs to the PsaM family.

The protein localises to the cellular thylakoid membrane. The chain is Photosystem I reaction center subunit XII from Parasynechococcus marenigrum (strain WH8102).